The primary structure comprises 506 residues: Cysteine--tRNA ligase (506 aa).

Cysteine 34 contributes to the Zn(2+) binding site. A 'HIGH' region motif is present at residues 36–46 (PTVYDFAHIGN). Zn(2+)-binding residues include cysteine 230, histidine 269, and glutamate 273. The short motif at 302–306 (KMSKS) is the 'KMSKS' region element. Lysine 305 is an ATP binding site.

It belongs to the class-I aminoacyl-tRNA synthetase family. As to quaternary structure, monomer. Zn(2+) is required as a cofactor.

Its subcellular location is the cytoplasm. It carries out the reaction tRNA(Cys) + L-cysteine + ATP = L-cysteinyl-tRNA(Cys) + AMP + diphosphate. This is Cysteine--tRNA ligase from Brucella abortus (strain S19).